The sequence spans 558 residues: Dihydroxy-acid dehydratase (558 aa).

Position 78 (D78) interacts with Mg(2+). C119 provides a ligand contact to [2Fe-2S] cluster. D120 and K121 together coordinate Mg(2+). K121 carries the post-translational modification N6-carboxylysine. C192 provides a ligand contact to [2Fe-2S] cluster. E446 is a Mg(2+) binding site. Residue S472 is the Proton acceptor of the active site.

Belongs to the IlvD/Edd family. In terms of assembly, homodimer. The cofactor is [2Fe-2S] cluster. Mg(2+) is required as a cofactor.

The enzyme catalyses (2R)-2,3-dihydroxy-3-methylbutanoate = 3-methyl-2-oxobutanoate + H2O. It carries out the reaction (2R,3R)-2,3-dihydroxy-3-methylpentanoate = (S)-3-methyl-2-oxopentanoate + H2O. It participates in amino-acid biosynthesis; L-isoleucine biosynthesis; L-isoleucine from 2-oxobutanoate: step 3/4. The protein operates within amino-acid biosynthesis; L-valine biosynthesis; L-valine from pyruvate: step 3/4. Functionally, functions in the biosynthesis of branched-chain amino acids. Catalyzes the dehydration of (2R,3R)-2,3-dihydroxy-3-methylpentanoate (2,3-dihydroxy-3-methylvalerate) into 2-oxo-3-methylpentanoate (2-oxo-3-methylvalerate) and of (2R)-2,3-dihydroxy-3-methylbutanoate (2,3-dihydroxyisovalerate) into 2-oxo-3-methylbutanoate (2-oxoisovalerate), the penultimate precursor to L-isoleucine and L-valine, respectively. The protein is Dihydroxy-acid dehydratase of Campylobacter jejuni subsp. jejuni serotype O:23/36 (strain 81-176).